Consider the following 901-residue polypeptide: Protein SOK1 (901 aa).

Disordered regions lie at residues 1–87 (MDQP…QNII), 106–139 (RSSG…SDLK), and 162–231 (NDDN…NASN). Residues 10–51 (PTTASNPAPSSTNSSSAPSATNSKQERSSSSLSKPSSVVPSK) show a composition bias toward low complexity. Residues serine 40 and serine 53 each carry the phosphoserine modification. Composition is skewed to polar residues over residues 74–87 (GDTS…QNII) and 106–115 (RSSGVITPSM). Positions 116–138 (SLNASTNATNNDSSGNSANSSDL) are enriched in low complexity. Phosphoserine is present on residues serine 191 and serine 193. Polar residues predominate over residues 220–231 (AAQQQPPGNASN). Residue serine 245 is modified to Phosphoserine.

This sequence belongs to the TCP11 family.

It is found in the nucleus. In terms of biological role, high copy suppressor of a cyclic AMP-dependent protein kinase mutant. The protein is Protein SOK1 (SOK1) of Saccharomyces cerevisiae (strain ATCC 204508 / S288c) (Baker's yeast).